The chain runs to 110 residues: UPF0122 protein SMU_1061 (110 aa).

This sequence belongs to the UPF0122 family.

In terms of biological role, might take part in the signal recognition particle (SRP) pathway. This is inferred from the conservation of its genetic proximity to ftsY/ffh. May be a regulatory protein. This chain is UPF0122 protein SMU_1061 (ylxM), found in Streptococcus mutans serotype c (strain ATCC 700610 / UA159).